Reading from the N-terminus, the 180-residue chain is Inner membrane-spanning protein YciB (180 aa).

5 consecutive transmembrane segments (helical) span residues 25-45 (QNAT…CYVI), 49-69 (VSKL…ITLI), 76-96 (IKIK…MSGI), 118-138 (IILS…NEIV), and 150-170 (FKVF…LPLL).

Belongs to the YciB family.

It is found in the cell inner membrane. Plays a role in cell envelope biogenesis, maintenance of cell envelope integrity and membrane homeostasis. This Rickettsia felis (strain ATCC VR-1525 / URRWXCal2) (Rickettsia azadi) protein is Inner membrane-spanning protein YciB.